The following is a 258-amino-acid chain: Phycoerythrobilin:ferredoxin oxidoreductase (258 aa).

The protein belongs to the HY2 family.

It catalyses the reaction (3Z)-phycoerythrobilin + oxidized 2[4Fe-4S]-[ferredoxin] = 15,16-dihydrobiliverdin + reduced 2[4Fe-4S]-[ferredoxin] + 2 H(+). Functionally, catalyzes the two-electron reduction of the C2 and C3(1) diene system of 15,16-dihydrobiliverdin. In Prochlorococcus marinus (strain NATL1A), this protein is Phycoerythrobilin:ferredoxin oxidoreductase.